A 218-amino-acid chain; its full sequence is UPF0502 protein Mmwyl1_3509 (218 aa).

It belongs to the UPF0502 family.

The protein is UPF0502 protein Mmwyl1_3509 of Marinomonas sp. (strain MWYL1).